We begin with the raw amino-acid sequence, 90 residues long: DNA-binding protein HU-1 (90 aa).

Thr-4 bears the Phosphothreonine mark.

The protein belongs to the bacterial histone-like protein family. As to quaternary structure, homodimer.

In terms of biological role, histone-like DNA-binding protein which is capable of wrapping DNA to stabilize it, and thus to prevent its denaturation under extreme environmental conditions. The sequence is that of DNA-binding protein HU-1 (hup2) from Halalkalibacterium halodurans (strain ATCC BAA-125 / DSM 18197 / FERM 7344 / JCM 9153 / C-125) (Bacillus halodurans).